A 642-amino-acid polypeptide reads, in one-letter code: Threonine--tRNA ligase (642 aa).

In terms of domain architecture, TGS spans 1–61 (MPVVTLPDGS…DSDANLAIIT (61 aa)). The interval 243-534 (DHRKIGKQLD…LTEEYAGFFP (292 aa)) is catalytic. Residues cysteine 334, histidine 385, and histidine 511 each coordinate Zn(2+).

This sequence belongs to the class-II aminoacyl-tRNA synthetase family. In terms of assembly, homodimer. The cofactor is Zn(2+).

The protein localises to the cytoplasm. The enzyme catalyses tRNA(Thr) + L-threonine + ATP = L-threonyl-tRNA(Thr) + AMP + diphosphate + H(+). In terms of biological role, catalyzes the attachment of threonine to tRNA(Thr) in a two-step reaction: L-threonine is first activated by ATP to form Thr-AMP and then transferred to the acceptor end of tRNA(Thr). Also edits incorrectly charged L-seryl-tRNA(Thr). The polypeptide is Threonine--tRNA ligase (Photorhabdus laumondii subsp. laumondii (strain DSM 15139 / CIP 105565 / TT01) (Photorhabdus luminescens subsp. laumondii)).